Here is a 301-residue protein sequence, read N- to C-terminus: Methionine aminopeptidase (301 aa).

A substrate-binding site is contributed by His65. Positions 85, 96, and 156 each coordinate a divalent metal cation. His164 serves as a coordination point for substrate. Residues Glu189 and Glu284 each coordinate a divalent metal cation.

The protein belongs to the peptidase M24A family. Methionine aminopeptidase archaeal type 2 subfamily. As to quaternary structure, monomer. It depends on Co(2+) as a cofactor. Requires Zn(2+) as cofactor. Mn(2+) is required as a cofactor. The cofactor is Fe(2+).

It carries out the reaction Release of N-terminal amino acids, preferentially methionine, from peptides and arylamides.. In terms of biological role, removes the N-terminal methionine from nascent proteins. The N-terminal methionine is often cleaved when the second residue in the primary sequence is small and uncharged (Met-Ala-, Cys, Gly, Pro, Ser, Thr, or Val). The protein is Methionine aminopeptidase of Saccharolobus solfataricus (strain ATCC 35092 / DSM 1617 / JCM 11322 / P2) (Sulfolobus solfataricus).